The chain runs to 286 residues: Forkhead box protein E3 (286 aa).

The disordered stretch occupies residues 1 to 62; that stretch reads MDAHVAFSGF…GRRRRRPLQR (62 aa). The fork-head DNA-binding region spans 64–158; it reads KPPYSYIALI…DNGSFLRRRK (95 aa).

Its subcellular location is the nucleus. Transcription factor that controls lens epithelial cell growth through regulation of proliferation, apoptosis and cell cycle. During lens development, controls the ratio of the lens fiber cells to the cells of the anterior lens epithelium by regulating the rate of proliferation and differentiation. Controls lens vesicle closure and subsequent separation of the lens vesicle from ectoderm. Controls the expression of DNAJB1 in a pathway that is crucial for the development of the anterior segment of the eye. In Rattus norvegicus (Rat), this protein is Forkhead box protein E3 (Foxe3).